The primary structure comprises 443 residues: 23S rRNA (uracil(1939)-C(5))-methyltransferase RlmD (443 aa).

Residues 4–66 (QNRFDRTSFQ…RHFDEARVVE (63 aa)) enclose the TRAM domain. Residues cysteine 79, cysteine 85, cysteine 88, and cysteine 167 each contribute to the [4Fe-4S] cluster site. Positions 275, 304, 309, 325, 352, and 373 each coordinate S-adenosyl-L-methionine. Cysteine 399 functions as the Nucleophile in the catalytic mechanism.

It belongs to the class I-like SAM-binding methyltransferase superfamily. RNA M5U methyltransferase family. RlmD subfamily.

It catalyses the reaction uridine(1939) in 23S rRNA + S-adenosyl-L-methionine = 5-methyluridine(1939) in 23S rRNA + S-adenosyl-L-homocysteine + H(+). Functionally, catalyzes the formation of 5-methyl-uridine at position 1939 (m5U1939) in 23S rRNA. This is 23S rRNA (uracil(1939)-C(5))-methyltransferase RlmD from Xylella fastidiosa (strain 9a5c).